Here is an 84-residue protein sequence, read N- to C-terminus: CLAVATA3/ESR (CLE)-related protein 13 (84 aa).

Residues 1–29 (MGRYTTDQVQVYVLVIVLCTFFSTLQARS) form the signal peptide. The disordered stretch occupies residues 57 to 84 (KQVRDISGDRLSPAGPDPQHNGRSPPRK). 2 positions are modified to hydroxyproline: Pro69 and Pro72. A glycan (O-linked (Ara...) hydroxyproline) is linked at Pro72.

This sequence belongs to the CLV3/ESR signal peptide family. In terms of processing, the O-glycosylation (arabinosylation) of the hydroxyproline Pro-72 enhances binding affinity of the CLE13p peptide for its receptor. Expressed in young nodules throughout the central tissue. Expressed in the apical region of elongated nodules, corresponding to the meristematic and early infection zones.

Its subcellular location is the secreted. It is found in the extracellular space. Functionally, signaling peptide involved in the regulation of nodulation. Moves from root to shoot to function with the receptor kinase SUNN, in a signaling pathway that plays roles during cellular differentiation, both at the onset of nodulation, and later during nodule meristem development and subsequent homeostasis. Interacts with SUNN signaling to control nodule numbers. SUNN is involved in the autoregulation of nodulation (AON), a long distance systemic signaling from root to shoot and back again, which allows legumes to limit the number of root nodules formed based on available nitrogen and previous rhizobial colonization. The protein is CLAVATA3/ESR (CLE)-related protein 13 of Medicago truncatula (Barrel medic).